A 513-amino-acid polypeptide reads, in one-letter code: Glucose-6-phosphate 1-dehydrogenase 2 (513 aa).

Ala2 is modified (N-acetylalanine). At Ser8 the chain carries Phosphoserine. Position 10 is a phosphothreonine (Thr10). NADP(+)-binding positions include 38–45 and Arg72; that span reads GASGDLAK. Lys89 carries the N6-acetyllysine modification. Residues Tyr147 and Lys171 each contribute to the NADP(+) site. D-glucose 6-phosphate-binding positions include Lys171, 201–205, Glu239, and Asp258; that span reads HYLDK. At Lys171 the chain carries N6-(2-hydroxyisobutyryl)lysine; alternate. At Lys171 the chain carries N6-acetyllysine; alternate. The Proton acceptor role is filled by His263. Residue Arg357 participates in NADP(+) binding. D-glucose 6-phosphate contacts are provided by Lys360 and Arg365. The NADP(+) site is built by Lys366, Arg370, and Arg393. D-glucose 6-phosphate is bound at residue Gln395. NADP(+) is bound at residue 421-423; the sequence is DLT. An N6-acetyllysine modification is found at Lys432. NADP(+) is bound by residues Arg487 and Tyr503. At Tyr503 the chain carries Phosphotyrosine.

This sequence belongs to the glucose-6-phosphate dehydrogenase family. As to quaternary structure, homotetramer; dimer of dimers. Interacts with SIRT2; the interaction is enhanced by H(2)O(2) treatment. Acetylated by ELP3; acetylation inhibits its homodimerization and enzyme activity. Deacetylated by SIRT2; deacetylation stimulates its enzyme activity. As to expression, testis.

Its subcellular location is the cytoplasm. The protein resides in the cytosol. The protein localises to the membrane. The catalysed reaction is D-glucose 6-phosphate + NADP(+) = 6-phospho-D-glucono-1,5-lactone + NADPH + H(+). The protein operates within carbohydrate degradation; pentose phosphate pathway; D-ribulose 5-phosphate from D-glucose 6-phosphate (oxidative stage): step 1/3. Catalyzes the rate-limiting step of the oxidative pentose-phosphate pathway, which represents a route for the dissimilation of carbohydrates besides glycolysis. The main function of this enzyme is to provide reducing power (NADPH) and pentose phosphates for fatty acid and nucleic acid synthesis. In Mus musculus (Mouse), this protein is Glucose-6-phosphate 1-dehydrogenase 2 (G6pd2).